The sequence spans 91 residues: Putative membrane protein insertion efficiency factor (91 aa).

Residues 66–91 (GGVDPVPSCGCHSDKETTPKEKSDNA) are disordered. Over residues 77–91 (HSDKETTPKEKSDNA) the composition is skewed to basic and acidic residues.

It belongs to the UPF0161 family.

It localises to the cell inner membrane. Could be involved in insertion of integral membrane proteins into the membrane. The protein is Putative membrane protein insertion efficiency factor of Hydrogenovibrio crunogenus (strain DSM 25203 / XCL-2) (Thiomicrospira crunogena).